We begin with the raw amino-acid sequence, 344 residues long: Putative NAD(P)H nitroreductase MT3217 (344 aa).

Residues 40-44 (QPWRW) and arginine 326 each bind FMN.

This sequence belongs to the nitroreductase family. In terms of assembly, interacts with human TLR2. FMN is required as a cofactor.

Its function is as follows. Stimulates pro-inflammatory cytokine expression via TLR2 signaling pathway. Activation of TLR2 results in the phosphorylation and activation of NF-kappa-B. Also induces TLR2 expression. May influence the innate immune responses to facilitate the survival of M.tuberculosis in the granulomatous microenvironment. In Mycobacterium tuberculosis (strain CDC 1551 / Oshkosh), this protein is Putative NAD(P)H nitroreductase MT3217.